The sequence spans 252 residues: Chitooligosaccharide deacetylase (252 aa).

The Mg(2+) site is built by histidine 61 and histidine 125.

Belongs to the YdjC deacetylase family. ChbG subfamily. As to quaternary structure, homodimer. Requires Mg(2+) as cofactor.

It is found in the cytoplasm. The catalysed reaction is N,N'-diacetylchitobiose + H2O = N-acetyl-beta-D-glucosaminyl-(1-&gt;4)-D-glucosamine + acetate. It carries out the reaction diacetylchitobiose-6'-phosphate + H2O = N'-monoacetylchitobiose-6'-phosphate + acetate. It participates in glycan degradation; chitin degradation. Its function is as follows. Involved in the degradation of chitin. ChbG is essential for growth on the acetylated chitooligosaccharides chitobiose and chitotriose but is dispensable for growth on cellobiose and chitosan dimer, the deacetylated form of chitobiose. Deacetylation of chitobiose-6-P and chitotriose-6-P is necessary for both the activation of the chb promoter by the regulatory protein ChbR and the hydrolysis of phosphorylated beta-glucosides by the phospho-beta-glucosidase ChbF. Catalyzes the removal of only one acetyl group from chitobiose-6-P to yield monoacetylchitobiose-6-P, the inducer of ChbR and the substrate of ChbF. This chain is Chitooligosaccharide deacetylase, found in Shigella flexneri serotype 5b (strain 8401).